The primary structure comprises 328 residues: MSLLKTSERGFSRELPDVQSTLPDVRINLTRVGVKNVKKLVEVTRPGKRPVIFISNFDIFVDLPGSLKGANLSRNFEVIDEVLQSAIEGEVKEIEQLCSRVARRLLDKHEYADRTEVQMRSEFMVAGETPVTGTLCQEVVKVFASAIAQRTFKDPIVRKSIGAEVTGMTACPCAQNIMQERAREVMENLDIAKDKIESFFKEVPMATHNQRGRGFLSIETDDESHVKLEKIIMILKQSMSTPIFELLKRGDEGHVVLSAHKNPRFVEDCVREMARRVHAEFGDLPGDSVVTIAQDNEESIHQHDAFAERQATIAELADEINGENLDVS.

The protein belongs to the GTP cyclohydrolase IV family. In terms of assembly, homodimer. Requires Fe(2+) as cofactor.

It carries out the reaction GTP + H2O = 7,8-dihydroneopterin 2',3'-cyclic phosphate + formate + diphosphate + H(+). It participates in cofactor biosynthesis; 5,6,7,8-tetrahydromethanopterin biosynthesis. In terms of biological role, converts GTP to 7,8-dihydro-D-neopterin 2',3'-cyclic phosphate, the first intermediate in the biosynthesis of coenzyme methanopterin. The protein is GTP cyclohydrolase MptA of Methanospirillum hungatei JF-1 (strain ATCC 27890 / DSM 864 / NBRC 100397 / JF-1).